The sequence spans 107 residues: U1-lycotoxin-Ls1p (107 aa).

The first 20 residues, 1–20 (MMKVLVVVALLVTLISYSSS), serve as a signal peptide directing secretion. The propeptide occupies 21–41 (EGIDDLEADELLSLMANEQTR). 4 disulfides stabilise this stretch: Cys-44/Cys-59, Cys-51/Cys-68, Cys-58/Cys-86, and Cys-70/Cys-84.

This sequence belongs to the neurotoxin 19 (CSTX) family. 04 (U1-Lctx) subfamily. As to expression, expressed by the venom gland.

The protein localises to the secreted. This chain is U1-lycotoxin-Ls1p, found in Lycosa singoriensis (Wolf spider).